Here is a 120-residue protein sequence, read N- to C-terminus: Large ribosomal subunit protein uL22 (120 aa).

Belongs to the universal ribosomal protein uL22 family. As to quaternary structure, part of the 50S ribosomal subunit.

Its function is as follows. This protein binds specifically to 23S rRNA; its binding is stimulated by other ribosomal proteins, e.g. L4, L17, and L20. It is important during the early stages of 50S assembly. It makes multiple contacts with different domains of the 23S rRNA in the assembled 50S subunit and ribosome. Functionally, the globular domain of the protein is located near the polypeptide exit tunnel on the outside of the subunit, while an extended beta-hairpin is found that lines the wall of the exit tunnel in the center of the 70S ribosome. This chain is Large ribosomal subunit protein uL22, found in Corynebacterium aurimucosum (strain ATCC 700975 / DSM 44827 / CIP 107346 / CN-1) (Corynebacterium nigricans).